A 296-amino-acid polypeptide reads, in one-letter code: Mitochondrial arginine transporter BAC2 (296 aa).

Solcar repeat units lie at residues 13-93, 104-187, and 198-282; these read GREF…FSRS, PSYR…VRER, and ENLR…ALRC. A run of 6 helical transmembrane segments spans residues 16-36, 70-90, 110-130, 162-181, 204-224, and 260-280; these read FVAG…LDTL, AAPL…YAIF, ALGG…VELI, GLTI…FWTY, LVAG…LDVV, and TAVA…EVAL.

The protein belongs to the mitochondrial carrier (TC 2.A.29) family. As to expression, high expression in flowers, stamens, petals and pollen. Expressed in roots, leaves and stems.

It localises to the mitochondrion inner membrane. Its activity is regulated as follows. Inhibited by mercuric chloride. Its function is as follows. Mitochondrial arginine transporter that catalyzes the counter-exchange of arginine with lysine, ornithine, arginine, histidine and citrulline. Substrate preference in reconstituted proteoliposomes is arginine &gt; homoarginine &gt; citrulline &gt; histidine &gt; lysine &gt; ornithine. May be involved in the delivery of arginine, released from seed reserves, to mitochondrial arginase and the export of ornithine. May contribute to proline accumulation in response to hyperosmotic stress. The protein is Mitochondrial arginine transporter BAC2 (BAC2) of Arabidopsis thaliana (Mouse-ear cress).